Consider the following 328-residue polypeptide: 3-dehydroquinate synthase (328 aa).

This sequence belongs to the archaeal-type DHQ synthase family.

The catalysed reaction is 2-amino-2,3,7-trideoxy-D-lyxo-hept-6-ulosonate + NAD(+) + H2O = 3-dehydroquinate + NH4(+) + NADH + H(+). In terms of biological role, catalyzes the oxidative deamination and cyclization of 2-amino-3,7-dideoxy-D-threo-hept-6-ulosonic acid (ADH) to yield 3-dehydroquinate (DHQ), which is fed into the canonical shikimic pathway of aromatic amino acid biosynthesis. This Methanosphaerula palustris (strain ATCC BAA-1556 / DSM 19958 / E1-9c) protein is 3-dehydroquinate synthase.